The primary structure comprises 410 residues: Regulator of microtubule dynamics protein 2 (410 aa).

Residues 9 to 28 (LILGIMVGTAGISLLLLWYH) traverse the membrane as a helical segment. At Ser-51 the chain carries Phosphoserine. Residues 68–110 (FQERQLQILEKLNELLTNMEELKEEIRFLKEAIPKLEEYIQDE) adopt a coiled-coil conformation. At Ser-121 the chain carries Phosphoserine. Basic residues predominate over residues 122-131 (PQHRARKRRL). The segment at 122–164 (PQHRARKRRLPTIQSSATSNSSEEAESEGGYITANTDTEEQSF) is disordered. Thr-139 is subject to Phosphothreonine. Residue Tyr-152 is modified to Phosphotyrosine. Thr-154 and Thr-157 each carry phosphothreonine.

This sequence belongs to the RMDN family. In terms of assembly, interacts with microtubules.

It is found in the membrane. It localises to the cytoplasm. Its subcellular location is the cytoskeleton. The protein localises to the spindle. The protein resides in the spindle pole. The sequence is that of Regulator of microtubule dynamics protein 2 (RMDN2) from Homo sapiens (Human).